The primary structure comprises 419 residues: eIF5-mimic protein 1 (419 aa).

The segment at 1–22 (MNKHQKPVLTGQRFKTRKRDEK) is disordered. The residue at position 117 (Lys117) is an N6-acetyllysine. Positions 248–415 (VQQSLGTRKE…QNAEEESESE (168 aa)) constitute a W2 domain. Phosphoserine occurs at positions 412 and 414.

Belongs to the BZW family. In terms of assembly, interacts with EIF3E, EIF2S2 and EIF3C.

The protein resides in the cytoplasm. Its function is as follows. Translation initiation regulator which represses non-AUG initiated translation and repeat-associated non-AUG (RAN) initiated translation by acting as a competitive inhibitor of eukaryotic translation initiation factor 5 (EIF5) function. Increases the accuracy of translation initiation by impeding EIF5-dependent translation from non-AUG codons by competing with it for interaction with EIF2S2 within the 43S pre-initiation complex (PIC) in an EIF3C-binding dependent manner. This Macaca fascicularis (Crab-eating macaque) protein is eIF5-mimic protein 1 (BZW2).